The chain runs to 167 residues: Alanine- and arginine-rich domain-containing protein (167 aa).

Positions 140-167 (LKKRQDQELASKPQSPQDKEMNSECGSA) are disordered.

In terms of tissue distribution, preferentially expressed in testis both in embryo and adult. Expressed at much lower level in other tissues.

This chain is Alanine- and arginine-rich domain-containing protein (Aard), found in Mus musculus (Mouse).